Consider the following 148-residue polypeptide: UPF0756 membrane protein YeaL (148 aa).

4 consecutive transmembrane segments (helical) span residues 14–34, 51–71, 80–100, and 121–141; these read ALGF…LIIV, LTIG…SGSL, FFNW…WLGG, and VLGV…AGLV.

Belongs to the UPF0756 family.

It is found in the cell membrane. This chain is UPF0756 membrane protein YeaL, found in Escherichia fergusonii (strain ATCC 35469 / DSM 13698 / CCUG 18766 / IAM 14443 / JCM 21226 / LMG 7866 / NBRC 102419 / NCTC 12128 / CDC 0568-73).